The sequence spans 336 residues: HTH-type transcriptional repressor PurR (336 aa).

The 55-residue stretch at 2-56 (ATIKDVAKLAGVSTTTVSHVINKTRFVAEDTSKAVWDAIQQLNYSPSAVARSLKV) folds into the HTH lacI-type domain. The H-T-H motif DNA-binding region spans 4–23 (IKDVAKLAGVSTTTVSHVIN). The DNA-binding element occupies 48–56 (SAVARSLKV). The hypoxanthine site is built by tyrosine 73, lysine 188, phenylalanine 219, and aspartate 273.

In terms of assembly, homodimer.

Its pathway is purine metabolism; purine nucleotide biosynthesis [regulation]. Its function is as follows. Is the main repressor of the genes involved in the de novo synthesis of purine nucleotides, regulating purB, purC, purEK, purF, purHD, purL, purMN and guaBA expression. PurR is allosterically activated to bind its cognate DNA by binding the purine corepressors, hypoxanthine or guanine, thereby effecting transcription repression. The protein is HTH-type transcriptional repressor PurR of Actinobacillus pleuropneumoniae serotype 3 (strain JL03).